The chain runs to 242 residues: 1-(5-phosphoribosyl)-5-[(5-phosphoribosylamino)methylideneamino] imidazole-4-carboxamide isomerase (242 aa).

The Proton acceptor role is filled by Asp-10. The active-site Proton donor is the Asp-132.

Belongs to the HisA/HisF family.

It is found in the cytoplasm. The enzyme catalyses 1-(5-phospho-beta-D-ribosyl)-5-[(5-phospho-beta-D-ribosylamino)methylideneamino]imidazole-4-carboxamide = 5-[(5-phospho-1-deoxy-D-ribulos-1-ylimino)methylamino]-1-(5-phospho-beta-D-ribosyl)imidazole-4-carboxamide. It participates in amino-acid biosynthesis; L-histidine biosynthesis; L-histidine from 5-phospho-alpha-D-ribose 1-diphosphate: step 4/9. This Methanopyrus kandleri (strain AV19 / DSM 6324 / JCM 9639 / NBRC 100938) protein is 1-(5-phosphoribosyl)-5-[(5-phosphoribosylamino)methylideneamino] imidazole-4-carboxamide isomerase.